Reading from the N-terminus, the 372-residue chain is Chorismate synthase (372 aa).

R48 lines the NADP(+) pocket. FMN is bound by residues R131–S133, N243–A244, G288, K303–S307, and R329.

This sequence belongs to the chorismate synthase family. In terms of assembly, homotetramer. FMNH2 is required as a cofactor.

It carries out the reaction 5-O-(1-carboxyvinyl)-3-phosphoshikimate = chorismate + phosphate. It functions in the pathway metabolic intermediate biosynthesis; chorismate biosynthesis; chorismate from D-erythrose 4-phosphate and phosphoenolpyruvate: step 7/7. Functionally, catalyzes the anti-1,4-elimination of the C-3 phosphate and the C-6 proR hydrogen from 5-enolpyruvylshikimate-3-phosphate (EPSP) to yield chorismate, which is the branch point compound that serves as the starting substrate for the three terminal pathways of aromatic amino acid biosynthesis. This reaction introduces a second double bond into the aromatic ring system. This Caulobacter vibrioides (strain ATCC 19089 / CIP 103742 / CB 15) (Caulobacter crescentus) protein is Chorismate synthase.